The chain runs to 274 residues: Envelope glycoprotein L (274 aa).

The signal sequence occupies residues 1–21 (MMPLLLLILLSTRNLLGAAQS). Residues 51 to 251 (VEHKCREALA…RSYRDRFPAV (201 aa)) enclose the gL betaherpesvirus-type domain. Cys-156 and Cys-161 are joined by a disulfide.

The protein belongs to the herpesviridae glycoprotein L (gL) family. Betaherpesvirinae gL subfamily. Interacts with glycoprotein H (gH); this interaction is necessary for the correct processing and cell surface expression of gH.

Its subcellular location is the virion membrane. The protein resides in the host cell membrane. It is found in the host Golgi apparatus. It localises to the host trans-Golgi network. Its function is as follows. The heterodimer glycoprotein H-glycoprotein L is required for the fusion of viral and plasma membranes leading to virus entry into the host cell. Acts as a functional inhibitor of gH and maintains gH in an inhibited form. Upon binding to host integrins, gL dissociates from gH leading to activation of the viral fusion glycoproteins gB and gH. The sequence is that of Envelope glycoprotein L from Murid herpesvirus 1 (strain Smith) (MuHV-1).